A 417-amino-acid polypeptide reads, in one-letter code: MFSRDVRLETYDPELAKAIAAEAGRQEDHVELIASENYCSPLVMEAQGSQLTNKYAEGYPGKRYYGGCEFVDIAEQLAIDRIKQVFGADYANVQPHSGSQANQAVYLALLQPGDTILGMSLAHGGHLTHGAKVNVSGKLFYAVQYGVNEQGLIDYDEVQRLATEHKPKMVVAGFSAYSQKIDWARFRAIADSVGAYLFVDMAHIAGLVAAGVYPSPMEHAHVVTSTTHKTLRGPRGGIIVAKGASEELQKKLQSIVFPGIQGGPLMHVIAAKAVAFKEALEPAFKTYQQQVVKNAQAMANTLIARGYKIVSGGTENHLMLVDMIGRDVSGKDAEAALGKAHITVNKNSVPNDPRSPFVTSGLRLGTPAITTRGYQEQDSIDLANWIADVLDAPTDEAVLAKVRDAVTAQCKRYPVYG.

Residues L121 and 125–127 (GHL) contribute to the (6S)-5,6,7,8-tetrahydrofolate site. K229 is modified (N6-(pyridoxal phosphate)lysine). 355-357 (SPF) provides a ligand contact to (6S)-5,6,7,8-tetrahydrofolate.

It belongs to the SHMT family. Homodimer. Requires pyridoxal 5'-phosphate as cofactor.

It localises to the cytoplasm. The enzyme catalyses (6R)-5,10-methylene-5,6,7,8-tetrahydrofolate + glycine + H2O = (6S)-5,6,7,8-tetrahydrofolate + L-serine. The protein operates within one-carbon metabolism; tetrahydrofolate interconversion. Its pathway is amino-acid biosynthesis; glycine biosynthesis; glycine from L-serine: step 1/1. Its function is as follows. Catalyzes the reversible interconversion of serine and glycine with tetrahydrofolate (THF) serving as the one-carbon carrier. This reaction serves as the major source of one-carbon groups required for the biosynthesis of purines, thymidylate, methionine, and other important biomolecules. Also exhibits THF-independent aldolase activity toward beta-hydroxyamino acids, producing glycine and aldehydes, via a retro-aldol mechanism. The polypeptide is Serine hydroxymethyltransferase (Xanthomonas euvesicatoria pv. vesicatoria (strain 85-10) (Xanthomonas campestris pv. vesicatoria)).